The primary structure comprises 563 residues: MAPRYHSAAEADTGVCGETKSRDSDALYDLPLRDPEEDQTTVALHPGSGEERFPVFQSEFTSVPVSDGGANGVTYPVGGSRKEQDEISSRGPPAYSLEIRGKTSEQLAESGADDEGTNGEKQSLLVPCLAVFSSNYNFTVTSIALFLMNQDPLYKDASDTVVGSSTVKMLSYAGAIVGMCTMGYLGDLIGRRLAMILTLALVFIGALLSSICAWGDGVTVLVIMGVCRFVLGVGSGGVYPLSAVSAAEGAGSEKSNDRSMRVSWAYSMNVPGIMFPYIVALVLWCTTHNVDVCFRILLGFGALPALLIWLPAWRMKEDRAYVAKDFAKHLAGVFVSRSYWRQLLGTGVCWLLYDVTAYGILLVQPEITQSIWGNSSSVTDVIWQNIILNGMGIPGCFMGILVLKQMGVKWLQFWGFVGLAVSAFLMAATVEILQGKAWAQLVLLCIVNFFINWGASITTFILPSLVFPPEVRSTYSGISAALGKIGAVGGIYTMKAILSTGGLTPMMICAGVPSLAAAILTWFYVDPVPNTLRSSFLQCFGSLAGSCPFIDCRKFRRGSRAFE.

Disordered stretches follow at residues 1 to 51 (MAPR…SGEE) and 67 to 96 (DGGA…PAYS). Over 1-127 (MAPRYHSAAE…NGEKQSLLVP (127 aa)) the chain is Extracellular. A helical transmembrane segment spans residues 128 to 148 (CLAVFSSNYNFTVTSIALFLM). Topologically, residues 149-168 (NQDPLYKDASDTVVGSSTVK) are cytoplasmic. The helical transmembrane segment at 169 to 189 (MLSYAGAIVGMCTMGYLGDLI) threads the bilayer. The Extracellular portion of the chain corresponds to 190 to 192 (GRR). The helical transmembrane segment at 193-213 (LAMILTLALVFIGALLSSICA) threads the bilayer. The Cytoplasmic segment spans residues 214 to 217 (WGDG). A helical transmembrane segment spans residues 218–238 (VTVLVIMGVCRFVLGVGSGGV). At 239-263 (YPLSAVSAAEGAGSEKSNDRSMRVS) the chain is on the extracellular side. A helical transmembrane segment spans residues 264–284 (WAYSMNVPGIMFPYIVALVLW). Over 285 to 291 (CTTHNVD) the chain is Cytoplasmic. A helical membrane pass occupies residues 292–312 (VCFRILLGFGALPALLIWLPA). The Extracellular segment spans residues 313–342 (WRMKEDRAYVAKDFAKHLAGVFVSRSYWRQ). The chain crosses the membrane as a helical span at residues 343–363 (LLGTGVCWLLYDVTAYGILLV). Topologically, residues 364–380 (QPEITQSIWGNSSSVTD) are cytoplasmic. Residues 381-401 (VIWQNIILNGMGIPGCFMGIL) traverse the membrane as a helical segment. At 402 to 412 (VLKQMGVKWLQ) the chain is on the extracellular side. A helical membrane pass occupies residues 413–433 (FWGFVGLAVSAFLMAATVEIL). Residues 434-440 (QGKAWAQ) lie on the Cytoplasmic side of the membrane. The helical transmembrane segment at 441-461 (LVLLCIVNFFINWGASITTFI) threads the bilayer. Residues 462–477 (LPSLVFPPEVRSTYSG) lie on the Extracellular side of the membrane. A helical membrane pass occupies residues 478–498 (ISAALGKIGAVGGIYTMKAIL). At 499-504 (STGGLT) the chain is on the cytoplasmic side. The chain crosses the membrane as a helical span at residues 505 to 525 (PMMICAGVPSLAAAILTWFYV). The Extracellular segment spans residues 526–563 (DPVPNTLRSSFLQCFGSLAGSCPFIDCRKFRRGSRAFE).

This sequence belongs to the major facilitator superfamily. Phosphate:H(+) symporter (TC 2.A.1.9) family.

Its subcellular location is the cell membrane. The catalysed reaction is phosphate(in) = phosphate(out). Inorganic phosphate transporter. Activity is likely sodium-independent. Exhibits higher activity under acidic pH, implying that either the monovalent form of phosphate is the preferred substrate or the transport activity is H(+)-dependent. In Toxoplasma gondii (strain ATCC 50861 / VEG), this protein is Inorganic phosphate transporter PT2.